We begin with the raw amino-acid sequence, 140 residues long: Nucleoside diphosphate kinase (140 aa).

ATP is bound by residues lysine 11, phenylalanine 59, arginine 87, threonine 93, arginine 104, and asparagine 114. The active-site Pros-phosphohistidine intermediate is histidine 117.

Belongs to the NDK family. As to quaternary structure, homotetramer. It depends on Mg(2+) as a cofactor.

The protein resides in the cytoplasm. It catalyses the reaction a 2'-deoxyribonucleoside 5'-diphosphate + ATP = a 2'-deoxyribonucleoside 5'-triphosphate + ADP. The enzyme catalyses a ribonucleoside 5'-diphosphate + ATP = a ribonucleoside 5'-triphosphate + ADP. In terms of biological role, major role in the synthesis of nucleoside triphosphates other than ATP. The ATP gamma phosphate is transferred to the NDP beta phosphate via a ping-pong mechanism, using a phosphorylated active-site intermediate. The chain is Nucleoside diphosphate kinase from Rhizobium etli (strain CIAT 652).